A 375-amino-acid polypeptide reads, in one-letter code: G-protein coupled estrogen receptor 1 (375 aa).

Residue Met1 is modified to N-acetylmethionine. The Extracellular portion of the chain corresponds to 1–62 (MAATTPAQDV…QQYVIALFLS (62 aa)). Residues Asn32 and Asn44 are each glycosylated (N-linked (GlcNAc...) asparagine). A helical membrane pass occupies residues 63-84 (CLYTIFLFPIGFVGNILILVVN). At 85–96 (ISFREKMTIPDL) the chain is on the cytoplasmic side. A helical transmembrane segment spans residues 97–120 (YFINLAAADLILVADSLIEVFNLD). Over 121–132 (EQYYDIAVLCTF) the chain is Extracellular. Cys130 and Cys207 are disulfide-bonded. The chain crosses the membrane as a helical span at residues 133 to 153 (MSLFLQINMYSSVFFLTWMSF). Topologically, residues 154–175 (DRYLALAKAMRCGLFRTKHHAR) are cytoplasmic. Residues 176–194 (LSCGLIWMASVSATLVPFT) form a helical membrane-spanning segment. At 195-220 (AVHLRHTEEACFCFADVREVQWLEVT) the chain is on the extracellular side. The chain crosses the membrane as a helical span at residues 221–236 (LGFIVPFAIIGLCYSL). Residues 237-259 (IVRALIRAHRHRGLRPRRQKALR) are Cytoplasmic-facing. The chain crosses the membrane as a helical span at residues 260 to 280 (MIFAVVLVFFICWLPENVFIS). Topologically, residues 281–306 (VHLLQWAQPGDTPCKQSFRHAYPLTG) are extracellular. Residues 307-327 (HIVNLAAFSNSCLSPLIYSFL) traverse the membrane as a helical segment. At 328-375 (GETFRDKLRLYVAQKTSLPALNRFCHATLKAVIPDSTEQSDVKFSSAV) the chain is on the cytoplasmic side.

This sequence belongs to the G-protein coupled receptor 1 family. As to quaternary structure, homodimer. Heterodimer; heterodimerizes with other G-protein-coupled receptor (GPCRs) like CRHR1, HTR1A and PAQR8. Interacts with RAMP3; the interaction confers proper subcellular localization and function in cardioprotection. Interacts with KRT7 and KRT8. Interacts with EGFR; the interaction increases after agonist-induced stimulation in cancer-associated fibroblasts (CAF). Interacts with EGFR and ESR1. Interacts (via C-terminus tail motif) with DLG4 (via N-terminus tandem pair of PDZ domains); the interaction is direct and induces the increase of GPER1 protein levels residing at the plasma membrane surface in a estradiol-independent manner. Ubiquitinated; ubiquitination occurs at the plasma membrane and leads to proteasome-mediated degradation. Post-translationally, glycosylated. Expressed in the brain. Expressed in neurons of the hippocampus, hypothalamic paraventricular nucleus (PVN), supraoptic nucleus (SON) and the median eminence. Expressed in magnocellular neurosecretory cells (MNCs) which secrete oxytocin but not in MNCs which secrete vasopressin. Expressed in glial cells. Expressed in the nucleus ambiguous. Expressed in epithelial cells, in pachytene spermatocytes (PS) (at protein level). Expressed strongly in vascular endothelial cells and poorly in vascular smooth muscle cells (VSMC). Expressed in the brain, lung, pituitary gland, adrenal medulla, renal pelvis and ovary. Expressed in CA1 hippocampus. Expressed weakly in heart, skeletal muscle and kidney.

The protein resides in the nucleus. The protein localises to the cytoplasm. It is found in the perinuclear region. It localises to the cytoskeleton. Its subcellular location is the cytoplasmic vesicle membrane. The protein resides in the cell membrane. The protein localises to the basolateral cell membrane. It is found in the endoplasmic reticulum membrane. It localises to the early endosome. Its subcellular location is the recycling endosome. The protein resides in the golgi apparatus. The protein localises to the trans-Golgi network. It is found in the golgi apparatus membrane. It localises to the cell projection. Its subcellular location is the dendrite. The protein resides in the dendritic spine membrane. The protein localises to the axon. It is found in the postsynaptic density. It localises to the mitochondrion membrane. In terms of biological role, G-protein coupled estrogen receptor that binds to 17-beta-estradiol (E2) with high affinity, leading to rapid and transient activation of numerous intracellular signaling pathways. Stimulates cAMP production, calcium mobilization and tyrosine kinase Src inducing the release of heparin-bound epidermal growth factor (HB-EGF) and subsequent transactivation of the epidermal growth factor receptor (EGFR), activating downstream signaling pathways such as PI3K/Akt and ERK/MAPK. Mediates pleiotropic functions among others in the cardiovascular, endocrine, reproductive, immune and central nervous systems. Has a role in cardioprotection by reducing cardiac hypertrophy and perivascular fibrosis in a RAMP3-dependent manner. Regulates arterial blood pressure by stimulating vasodilation and reducing vascular smooth muscle and microvascular endothelial cell proliferation. Plays a role in blood glucose homeostasis contributing to the insulin secretion response by pancreatic beta cells. Triggers mitochondrial apoptosis during pachytene spermatocyte differentiation. Stimulates uterine epithelial cell proliferation. Enhances uterine contractility in response to oxytocin. Contributes to thymic atrophy by inducing apoptosis. Attenuates TNF-mediated endothelial expression of leukocyte adhesion molecules. Promotes neuritogenesis in developing hippocampal neurons. Plays a role in acute neuroprotection against NMDA-induced excitotoxic neuronal death. Increases firing activity and intracellular calcium oscillations in luteinizing hormone-releasing hormone (LHRH) neurons. Inhibits early osteoblast proliferation at growth plate during skeletal development. Inhibits mature adipocyte differentiation and lipid accumulation. Involved in the recruitment of beta-arrestin 2 ARRB2 at the plasma membrane in epithelial cells. Also functions as a receptor for aldosterone mediating rapid regulation of vascular contractibility through the PI3K/ERK signaling pathway. Involved in cancer progression regulation. Stimulates cancer-associated fibroblast (CAF) proliferation by a rapid genomic response through the EGFR/ERK transduction pathway. Associated with EGFR, may act as a transcription factor activating growth regulatory genes (c-fos, cyclin D1). Promotes integrin alpha-5/beta-1 and fibronectin (FN) matrix assembly in breast cancer cells. This is G-protein coupled estrogen receptor 1 (Gper1) from Rattus norvegicus (Rat).